A 248-amino-acid chain; its full sequence is Myelin protein P0 (248 aa).

The signal sequence occupies residues 1–29 (MAPGAPSSSPSPILAALLFSSLVLSPTLA). The 114-residue stretch at 30–143 (IVVYTDREVY…DIVGKTSQVT (114 aa)) folds into the Ig-like V-type domain. Residues 30-153 (IVVYTDREVY…LYVFEKVPTR (124 aa)) lie on the Extracellular side of the membrane. The cysteines at positions 50 and 127 are disulfide-linked. Residue Asn122 is glycosylated (N-linked (GlcNAc...) (complex) asparagine). The chain crosses the membrane as a helical span at residues 154 to 179 (YGVVLGAVIGGILGVVLLLLLLFYLI). Residues 180 to 248 (RYCWLRRQAA…GLGESRKDKK (69 aa)) are Cytoplasmic-facing. Phosphoserine; by PKC is present on Ser210. Residues 222–248 (MLDHSRSTKAASEKKSKGLGESRKDKK) form a disordered region. Residues 224–248 (DHSRSTKAASEKKSKGLGESRKDKK) are compositionally biased toward basic and acidic residues. Ser226 and Ser228 each carry phosphoserine. The residue at position 233 (Ser233) is a Phosphoserine; by PKC. The residue at position 237 (Ser237) is a Phosphoserine. The residue at position 243 (Ser243) is a Phosphoserine; by PKC.

The protein belongs to the myelin P0 protein family. In terms of assembly, homodimer and homotetramer. N-glycosylated; contains sulfate-substituted glycan. As to expression, found only in peripheral nervous system Schwann cells.

It is found in the cell membrane. Is an adhesion molecule necessary for normal myelination in the peripheral nervous system. It mediates adhesion between adjacent myelin wraps and ultimately drives myelin compaction. The chain is Myelin protein P0 (Mpz) from Rattus norvegicus (Rat).